The primary structure comprises 206 residues: Cytidylate kinase (206 aa).

Position 9 to 17 (9 to 17 (GPAAAGKGT)) interacts with ATP. The span at 155–168 (LRERDRRDREREAA) shows a compositional bias: basic and acidic residues. A disordered region spans residues 155-174 (LRERDRRDREREAAPLRPAP).

It belongs to the cytidylate kinase family. Type 1 subfamily.

It is found in the cytoplasm. It catalyses the reaction CMP + ATP = CDP + ADP. The enzyme catalyses dCMP + ATP = dCDP + ADP. The sequence is that of Cytidylate kinase from Cereibacter sphaeroides (strain KD131 / KCTC 12085) (Rhodobacter sphaeroides).